A 351-amino-acid chain; its full sequence is DNA polymerase IV (351 aa).

The region spanning 4 to 184 is the UmuC domain; it reads FIHIDMDCFY…LPLGKIPGVG (181 aa). Mg(2+) contacts are provided by Asp8 and Asp102. The active site involves Glu103.

Belongs to the DNA polymerase type-Y family. In terms of assembly, monomer. Requires Mg(2+) as cofactor.

Its subcellular location is the cytoplasm. The catalysed reaction is DNA(n) + a 2'-deoxyribonucleoside 5'-triphosphate = DNA(n+1) + diphosphate. Functionally, poorly processive, error-prone DNA polymerase involved in untargeted mutagenesis. Copies undamaged DNA at stalled replication forks, which arise in vivo from mismatched or misaligned primer ends. These misaligned primers can be extended by PolIV. Exhibits no 3'-5' exonuclease (proofreading) activity. May be involved in translesional synthesis, in conjunction with the beta clamp from PolIII. The sequence is that of DNA polymerase IV from Pseudoalteromonas translucida (strain TAC 125).